We begin with the raw amino-acid sequence, 122 residues long: Fluoride-specific ion channel FluC (122 aa).

Transmembrane regions (helical) follow at residues 5–25 (FLIG…SGII), 29–49 (FGIP…VGFL), 65–85 (FIIT…YESF), and 93–113 (FIKS…MIYF). Na(+)-binding residues include glycine 72 and threonine 75.

Belongs to the fluoride channel Fluc/FEX (TC 1.A.43) family.

The protein localises to the cell membrane. The catalysed reaction is fluoride(in) = fluoride(out). Its activity is regulated as follows. Na(+) is not transported, but it plays an essential structural role and its presence is essential for fluoride channel function. Functionally, fluoride-specific ion channel. Important for reducing fluoride concentration in the cell, thus reducing its toxicity. This Methanococcus vannielii (strain ATCC 35089 / DSM 1224 / JCM 13029 / OCM 148 / SB) protein is Fluoride-specific ion channel FluC.